A 1122-amino-acid polypeptide reads, in one-letter code: Histone deacetylase 5 (1122 aa).

Residues 1–24 (MNSPNESDGMSGREPSLEILPRTS) form a disordered region. A Glycyl lysine isopeptide (Lys-Gly) (interchain with G-Cter in SUMO2) cross-link involves residue K35. Disordered stretches follow at residues 41–60 (AMPS…VELR) and 196–281 (KEPT…SSPL). Basic and acidic residues predominate over residues 247–258 (DSRDDFPLRKTA). S259 bears the Phosphoserine; by AMPK, CaMK1, SIK1 and PKD/PRKD1 mark. A compositionally biased stretch (basic and acidic residues) spans 272–281 (KVAERRSSPL). T292 carries the phosphothreonine; by PKC modification. Disordered stretches follow at residues 302 to 343 (GAGP…NIPT) and 481 to 504 (MRTV…LPQS). Residues 312–327 (NSAPGSGPSSPNSSHS) are compositionally biased toward low complexity. Residues 328 to 340 (TIAENGFTGSVPN) are compositionally biased toward polar residues. Positions 494-504 (SRTQSSPLPQS) are enriched in low complexity. S498 carries the post-translational modification Phosphoserine; by AMPK, CaMK1, SIK1 and PKD/PRKD1. K533 bears the N6-acetyllysine mark. Positions 536 to 625 (TKTGELPRQP…GPDLEEPGAG (90 aa)) are disordered. Positions 581–621 (STQEDLEEEDEEDDGEEEEDCIQVKDEEGESGAEEGPDLEE) are enriched in acidic residues. 2 positions are modified to phosphoserine: S611 and S661. The histone deacetylase stretch occupies residues 684 to 1028 (GVVYDTFMLK…VSALLSVELQ (345 aa)). C696, C698, H704, and C781 together coordinate Zn(2+). The active site involves H833. Residues 1081–1122 (EEAETVSAMALLSVGAEQAQAAAAREHSPRPAEEPMEQEPAL) carry the Nuclear export signal motif. Residues 1097-1122 (EQAQAAAAREHSPRPAEEPMEQEPAL) are disordered. The segment covering 1104 to 1113 (AREHSPRPAE) has biased composition (basic and acidic residues). At S1108 the chain carries Phosphoserine.

The protein belongs to the histone deacetylase family. HD type 2 subfamily. As to quaternary structure, interacts with AHRR, BAHD1, BCOR, HDAC7, HDAC9, CTBP1, MEF2C, NCOR2, NRIP1, PHB2 and a 14-3-3 chaperone protein. Interacts with BCL6, DDIT3/CHOP, GRK5, KDM5B and MYOCD. Interacts with EP300 in the presence of TFAP2C. Interacts with ANKRA2. Interacts with CUL7 (as part of the 3M complex); negatively regulated by ANKRA2. Interacts with ZBTB7B; the interaction allows the recruitment of HDAC4 on CD8 loci for deacetylation and possible inhibition of CD8 genes expression. Interacts with RARA. Phosphorylated by AMPK, CaMK1, SIK1 and PRKD1 at Ser-259 and Ser-498. The phosphorylation is required for the export to the cytoplasm and inhibition. Phosphorylated by the PKC kinases PKN1 and PKN2, impairing nuclear import. Phosphorylated by GRK5, leading to nuclear export of HDAC5 and allowing MEF2-mediated transcription. Post-translationally, ubiquitinated. Polyubiquitination however does not lead to its degradation. In terms of tissue distribution, ubiquitous.

It localises to the nucleus. Its subcellular location is the cytoplasm. It catalyses the reaction N(6)-acetyl-L-lysyl-[histone] + H2O = L-lysyl-[histone] + acetate. Functionally, responsible for the deacetylation of lysine residues on the N-terminal part of the core histones (H2A, H2B, H3 and H4). Histone deacetylation gives a tag for epigenetic repression and plays an important role in transcriptional regulation, cell cycle progression and developmental events. Histone deacetylases act via the formation of large multiprotein complexes. Involved in muscle maturation by repressing transcription of myocyte enhancer MEF2C. During muscle differentiation, it shuttles into the cytoplasm, allowing the expression of myocyte enhancer factors. Involved in the MTA1-mediated epigenetic regulation of ESR1 expression in breast cancer. Serves as a corepressor of RARA and causes its deacetylation. In association with RARA, plays a role in the repression of microRNA-10a and thereby in the inflammatory response. In Homo sapiens (Human), this protein is Histone deacetylase 5 (HDAC5).